Consider the following 132-residue polypeptide: D-ribose pyranase (132 aa).

Histidine 20 (proton donor) is an active-site residue. Substrate is bound by residues aspartate 28, histidine 99, and 121-123 (YSN).

This sequence belongs to the RbsD / FucU family. RbsD subfamily. As to quaternary structure, homodecamer.

The protein localises to the cytoplasm. The catalysed reaction is beta-D-ribopyranose = beta-D-ribofuranose. The protein operates within carbohydrate metabolism; D-ribose degradation; D-ribose 5-phosphate from beta-D-ribopyranose: step 1/2. Functionally, catalyzes the interconversion of beta-pyran and beta-furan forms of D-ribose. The sequence is that of D-ribose pyranase from Pseudomonas putida (strain W619).